We begin with the raw amino-acid sequence, 508 residues long: Chromosomal replication initiator protein DnaA (508 aa).

A domain I, interacts with DnaA modulators region spans residues 1 to 91 (MADDPGSSFT…TDALSRRLGQ (91 aa)). The domain II stretch occupies residues 91-167 (QQIQLGVRIA…AIDPAVAAGT (77 aa)). A disordered region spans residues 104 to 152 (DDVEDALIPSAEPFPDTDADLSARRRTDSRASGERGAVTNTQPGWTNYF). A compositionally biased stretch (basic and acidic residues) spans 124–136 (LSARRRTDSRASG). Positions 141-152 (VTNTQPGWTNYF) are enriched in polar residues. A domain III, AAA+ region region spans residues 168–384 (SLNRRYTFDT…GALIRVTAFA (217 aa)). Residues Gly212, Gly214, Lys215, and Thr216 each coordinate ATP. The domain IV, binds dsDNA stretch occupies residues 385–508 (SLNKTPIDKS…TTRIRQRSKR (124 aa)).

The protein belongs to the DnaA family. In terms of assembly, oligomerizes as a right-handed, spiral filament on DNA at oriC.

The protein resides in the cytoplasm. In terms of biological role, plays an essential role in the initiation and regulation of chromosomal replication. ATP-DnaA binds to the origin of replication (oriC) to initiate formation of the DNA replication initiation complex once per cell cycle. Binds the DnaA box (a 9 base pair repeat at the origin) and separates the double-stranded (ds)DNA. Forms a right-handed helical filament on oriC DNA; dsDNA binds to the exterior of the filament while single-stranded (ss)DNA is stabiized in the filament's interior. The ATP-DnaA-oriC complex binds and stabilizes one strand of the AT-rich DNA unwinding element (DUE), permitting loading of DNA polymerase. After initiation quickly degrades to an ADP-DnaA complex that is not apt for DNA replication. Binds acidic phospholipids. The protein is Chromosomal replication initiator protein DnaA of Mycobacterium avium.